A 459-amino-acid polypeptide reads, in one-letter code: Argininosuccinate lyase (459 aa).

Belongs to the lyase 1 family. Argininosuccinate lyase subfamily.

It is found in the cytoplasm. The enzyme catalyses 2-(N(omega)-L-arginino)succinate = fumarate + L-arginine. The protein operates within amino-acid biosynthesis; L-arginine biosynthesis; L-arginine from L-ornithine and carbamoyl phosphate: step 3/3. This Ruminiclostridium cellulolyticum (strain ATCC 35319 / DSM 5812 / JCM 6584 / H10) (Clostridium cellulolyticum) protein is Argininosuccinate lyase.